We begin with the raw amino-acid sequence, 333 residues long: Large ribosomal subunit protein uL3 (333 aa).

Basic residues-rich tracts occupy residues 1-10 and 17-26; these read MGMKRNRPRR and PRKRAKRPVP. The segment at 1–29 is disordered; sequence MGMKRNRPRRGSLAFSPRKRAKRPVPKIR.

This sequence belongs to the universal ribosomal protein uL3 family. In terms of assembly, part of the 50S ribosomal subunit. Forms a cluster with proteins L14 and L24e.

Its function is as follows. One of the primary rRNA binding proteins, it binds directly near the 3'-end of the 23S rRNA, where it nucleates assembly of the 50S subunit. The protein is Large ribosomal subunit protein uL3 of Methanococcus aeolicus (strain ATCC BAA-1280 / DSM 17508 / OCM 812 / Nankai-3).